The chain runs to 728 residues: MSTESKCPFNHTAAGGTSNHDWWPNRLNLEVLHRHSALSDPMDAEFDYAQAFKQLDLAAVKRDLHALMTMSQDWWPADFGHYGGLFVRMAWHGAGTYRIADGRGGAGGGQQRFAPLNSWPDNGNLDKARRLLWPIKQKYGRNISWADLFILTGNVALESMGFKTFGYGGGRADTWEPDDVYWGSEKIWLELSGGPNSRYSGDRDLENPLAAVQMGLIYVNPEGPDGKPDPVAAARDIRDTFARMAMNDEETVALIAGGHTFGKTHGAGPASHVGAEPEAAGIEQQGLGWKSTYGSGKAGDAITSGLEVTWTSTPTQWSNDFFKHLFSYEWELTKSPAGAHQWVAKDAEAVIPDAFDPSKKHRPTMLTTDLSLRFDPAYEKISRRFYENPDEFADAFARAWFKLTHRDMGPRSRYLGPEVPAEELLWQDPIPAVDHPLIDDADAAALKAKILATGLTVAQLVSTAWASASTFRGSDKRGGANGARIRLAPQKDWAVNQPAALAAVLETLEGVQKAFNDAQTGGKKVSLADLIVLAGAAGVEQAAKQAGVAVTVPFAAGRMDASQEQTDVDAMAVLEPVADGFRNYLKAAYKTPAEALLVDKAQLLTLTAPEMTVLIGGLRVLGANAGGAQHGVFTDRPGTLSNDFFVNLLDMGTEWKPASAANDVFEGRDRASGQLKWTGTRVDLIFGSHSQLRALAEVYGSADANEKFVRDFVAAWNKVMNLDRFDLA.

A cross-link (tryptophyl-tyrosyl-methioninium (Trp-Tyr) (with M-244)) is located at residues 91–218; that stretch reads WHGAGTYRIA…LAAVQMGLIY (128 aa). His-92 acts as the Proton acceptor in catalysis. The segment at residues 218–244 is a cross-link (tryptophyl-tyrosyl-methioninium (Tyr-Met) (with W-91)); the sequence is YVNPEGPDGKPDPVAAARDIRDTFARM. Residue His-259 participates in heme b binding.

This sequence belongs to the peroxidase family. Peroxidase/catalase subfamily. As to quaternary structure, homodimer or homotetramer. It depends on heme b as a cofactor. Formation of the three residue Trp-Tyr-Met cross-link is important for the catalase, but not the peroxidase activity of the enzyme.

It carries out the reaction H2O2 + AH2 = A + 2 H2O. It catalyses the reaction 2 H2O2 = O2 + 2 H2O. Its function is as follows. Bifunctional enzyme with both catalase and broad-spectrum peroxidase activity. This is Catalase-peroxidase 1 from Burkholderia vietnamiensis (strain G4 / LMG 22486) (Burkholderia cepacia (strain R1808)).